The chain runs to 178 residues: Protamine-like protein (178 aa).

2 disordered regions span residues 1-27 (PSTT…TVSD) and 77-178 (SVVK…RAKK). Composition is skewed to basic residues over residues 8-21 (SPKR…RKRT) and 94-178 (PRRR…RAKK). In terms of domain architecture, H15 spans 21–89 (TGPTVSDLIL…KAKGFYKLNK (69 aa)).

In terms of tissue distribution, male germ cells.

It localises to the nucleus. The protein localises to the chromosome. Its function is as follows. Replaces histones in the chromatin of sperm during the haploid phase of spermatogenesis. Compacts sperm DNA into a highly condensed, stable and inactive complex. The sequence is that of Protamine-like protein from Mullus surmuletus (Striped red mullet).